The chain runs to 730 residues: Hemolytic phospholipase C (730 aa).

The tat-type signal signal peptide spans 1 to 38; the sequence is MTENWKFRRRTFLKHGAQAATLAGLSGLFPETLRRALA.

The protein belongs to the bacterial phospholipase C family. In terms of processing, predicted to be exported by the Tat system. The position of the signal peptide cleavage has not been experimentally proven.

It carries out the reaction a 1,2-diacyl-sn-glycero-3-phosphocholine + H2O = phosphocholine + a 1,2-diacyl-sn-glycerol + H(+). In terms of biological role, hydrolyzes sphingomyelin in addition to phosphatidylcholine. The protein is Hemolytic phospholipase C (plcH) of Pseudomonas aeruginosa (strain ATCC 15692 / DSM 22644 / CIP 104116 / JCM 14847 / LMG 12228 / 1C / PRS 101 / PAO1).